Reading from the N-terminus, the 328-residue chain is GTPase Obg (328 aa).

Residues 2 to 160 enclose the Obg domain; sequence YNFKDSVSIT…LNVRLELFLV (159 aa). Positions 161 to 326 constitute an OBG-type G domain; that stretch reads ADIGLVGLPN…LIKEFFVLAK (166 aa). Residues 167–174, 192–196, 213–216, 280–283, and 307–309 contribute to the GTP site; these read GLPNAGKS, FTTKI, DIPG, NKLD, and SIY. Residues serine 174 and threonine 194 each contribute to the Mg(2+) site.

This sequence belongs to the TRAFAC class OBG-HflX-like GTPase superfamily. OBG GTPase family. As to quaternary structure, monomer. Mg(2+) serves as cofactor.

The protein localises to the cytoplasm. Functionally, an essential GTPase which binds GTP, GDP and possibly (p)ppGpp with moderate affinity, with high nucleotide exchange rates and a fairly low GTP hydrolysis rate. Plays a role in control of the cell cycle, stress response, ribosome biogenesis and in those bacteria that undergo differentiation, in morphogenesis control. The sequence is that of GTPase Obg from Borreliella afzelii (strain PKo) (Borrelia afzelii).